A 418-amino-acid polypeptide reads, in one-letter code: UDP-N-acetylglucosamine 1-carboxyvinyltransferase (418 aa).

Lys22–Asn23 is a binding site for phosphoenolpyruvate. Residue Arg92 coordinates UDP-N-acetyl-alpha-D-glucosamine. Cys116 functions as the Proton donor in the catalytic mechanism. Cys116 carries the post-translational modification 2-(S-cysteinyl)pyruvic acid O-phosphothioketal. UDP-N-acetyl-alpha-D-glucosamine-binding residues include Asp305 and Val327.

This sequence belongs to the EPSP synthase family. MurA subfamily.

It localises to the cytoplasm. It catalyses the reaction phosphoenolpyruvate + UDP-N-acetyl-alpha-D-glucosamine = UDP-N-acetyl-3-O-(1-carboxyvinyl)-alpha-D-glucosamine + phosphate. Its pathway is cell wall biogenesis; peptidoglycan biosynthesis. In terms of biological role, cell wall formation. Adds enolpyruvyl to UDP-N-acetylglucosamine. The polypeptide is UDP-N-acetylglucosamine 1-carboxyvinyltransferase (Endomicrobium trichonymphae).